The following is a 282-amino-acid chain: Pantothenate synthetase (282 aa).

Residue 30–37 (MGYLHEGH) participates in ATP binding. Residue histidine 37 is the Proton donor of the active site. A (R)-pantoate-binding site is contributed by glutamine 61. Glutamine 61 is a beta-alanine binding site. 147-150 (GMKD) is a binding site for ATP. A (R)-pantoate-binding site is contributed by glutamine 153. Residues valine 176 and 184 to 187 (KSSR) each bind ATP.

This sequence belongs to the pantothenate synthetase family. In terms of assembly, homodimer.

It is found in the cytoplasm. It catalyses the reaction (R)-pantoate + beta-alanine + ATP = (R)-pantothenate + AMP + diphosphate + H(+). The protein operates within cofactor biosynthesis; (R)-pantothenate biosynthesis; (R)-pantothenate from (R)-pantoate and beta-alanine: step 1/1. In terms of biological role, catalyzes the condensation of pantoate with beta-alanine in an ATP-dependent reaction via a pantoyl-adenylate intermediate. The sequence is that of Pantothenate synthetase from Bacillus cereus (strain AH187).